The sequence spans 145 residues: MRTTYMAKPNEVERKWYVVDAAGKTLGRLASEVAALLRGKHKPTFTPHVDCGDHVIVINADKVELTGKKLTKKLYYRHSLYPGGLKVRTALEMRTNYPEQMIERAVRGMLPKGSLGRQMFKKLHVYRGSEHPHQAQKPEVYELRG.

The protein belongs to the universal ribosomal protein uL13 family. Part of the 50S ribosomal subunit.

This protein is one of the early assembly proteins of the 50S ribosomal subunit, although it is not seen to bind rRNA by itself. It is important during the early stages of 50S assembly. This Geobacillus kaustophilus (strain HTA426) protein is Large ribosomal subunit protein uL13.